A 277-amino-acid chain; its full sequence is ATP synthase subunit a (277 aa).

5 helical membrane-spanning segments follow: residues 40–60 (AWHV…LIIF), 98–118 (SALI…MNLM), 154–174 (DLNL…FYSI), 219–239 (LFGN…IGYF), and 245–265 (FMWA…FMML).

Belongs to the ATPase A chain family. As to quaternary structure, F-type ATPases have 2 components, CF(1) - the catalytic core - and CF(0) - the membrane proton channel. CF(1) has five subunits: alpha(3), beta(3), gamma(1), delta(1), epsilon(1). CF(0) has three main subunits: a(1), b(2) and c(9-12). The alpha and beta chains form an alternating ring which encloses part of the gamma chain. CF(1) is attached to CF(0) by a central stalk formed by the gamma and epsilon chains, while a peripheral stalk is formed by the delta and b chains.

It is found in the cell inner membrane. Functionally, key component of the proton channel; it plays a direct role in the translocation of protons across the membrane. This is ATP synthase subunit a from Alteromonas mediterranea (strain DSM 17117 / CIP 110805 / LMG 28347 / Deep ecotype).